The following is a 328-amino-acid chain: Phosphatidylglycerol--prolipoprotein diacylglyceryl transferase (328 aa).

3 consecutive transmembrane segments (helical) span residues 15-35, 57-77, and 106-126; these read VIQGIPITWYSLSYILIILIS, IFMFSLVLGAILGGRLASTLV, and GMAIHGGFLGAIIAPLITINT. R156 contacts a 1,2-diacyl-sn-glycero-3-phospho-(1'-sn-glycerol). Helical transmembrane passes span 242-262 and 289-309; these read GFIFGVYVMLYAFFRFFIEYL and ISMGQILSLTLMLSGLIWIIV.

This sequence belongs to the Lgt family.

Its subcellular location is the cell inner membrane. The catalysed reaction is L-cysteinyl-[prolipoprotein] + a 1,2-diacyl-sn-glycero-3-phospho-(1'-sn-glycerol) = an S-1,2-diacyl-sn-glyceryl-L-cysteinyl-[prolipoprotein] + sn-glycerol 1-phosphate + H(+). Its pathway is protein modification; lipoprotein biosynthesis (diacylglyceryl transfer). In terms of biological role, catalyzes the transfer of the diacylglyceryl group from phosphatidylglycerol to the sulfhydryl group of the N-terminal cysteine of a prolipoprotein, the first step in the formation of mature lipoproteins. This chain is Phosphatidylglycerol--prolipoprotein diacylglyceryl transferase, found in Borreliella burgdorferi (strain ATCC 35210 / DSM 4680 / CIP 102532 / B31) (Borrelia burgdorferi).